We begin with the raw amino-acid sequence, 234 residues long: Phosphoribosylaminoimidazole-succinocarboxamide synthase (234 aa).

It belongs to the SAICAR synthetase family.

The catalysed reaction is 5-amino-1-(5-phospho-D-ribosyl)imidazole-4-carboxylate + L-aspartate + ATP = (2S)-2-[5-amino-1-(5-phospho-beta-D-ribosyl)imidazole-4-carboxamido]succinate + ADP + phosphate + 2 H(+). Its pathway is purine metabolism; IMP biosynthesis via de novo pathway; 5-amino-1-(5-phospho-D-ribosyl)imidazole-4-carboxamide from 5-amino-1-(5-phospho-D-ribosyl)imidazole-4-carboxylate: step 1/2. The chain is Phosphoribosylaminoimidazole-succinocarboxamide synthase from Pyrococcus furiosus (strain ATCC 43587 / DSM 3638 / JCM 8422 / Vc1).